We begin with the raw amino-acid sequence, 185 residues long: DNA-directed RNA polymerase 22 kDa subunit (185 aa).

This sequence belongs to the poxviridae DNA-directed RNA polymerase 22 kDa subunit family. The DNA-dependent RNA polymerase used for intermediate and late genes expression consists of eight subunits Rpo30/OPG66, Rpo7/OPG90, Rpo22/OPG103, Rpo147/OPG105, Rpo18/OPG119, Rpo19/OPG131, Rpo132/OPG151 and Rpo35/OPG156. The same holoenzyme, with the addition of the transcription-specificity factor OPG109, is used for early gene expression.

It is found in the virion. The catalysed reaction is RNA(n) + a ribonucleoside 5'-triphosphate = RNA(n+1) + diphosphate. Part of the DNA-dependent RNA polymerase which catalyzes the transcription of viral DNA into RNA using the four ribonucleoside triphosphates as substrates. Responsible for the transcription of early, intermediate and late genes. DNA-dependent RNA polymerase associates with the early transcription factor (ETF), itself composed of OPG118 and OPG133, thereby allowing the early genes transcription. Late transcription, and probably also intermediate transcription, require newly synthesized RNA polymerase. The chain is DNA-directed RNA polymerase 22 kDa subunit (OPG103) from Variola virus (isolate Human/India/Ind3/1967) (VARV).